The following is a 312-amino-acid chain: Small kinetochore-associated protein (312 aa).

Positions 1–13 are enriched in basic and acidic residues; that stretch reads MATHKAEAQETDF. 3 disordered regions span residues 1-32, 55-176, and 221-242; these read MATH…PSSR, LKRS…KDKN, and KGLN…DPTD. The span at 75-84 shows a compositional bias: polar residues; the sequence is RPTTMASSKT. 2 stretches are compositionally biased toward basic and acidic residues: residues 131–143 and 166–176; these read DVTK…RENG and QKPEEDLKDKN. The tract at residues 156 to 312 is interaction with SPAG5; sequence IRSSYKPLSK…LEEMEQLLEM (157 aa). Residues 169–210 adopt a coiled-coil conformation; it reads EEDLKDKNELLEAVNKQLHQKLTETQGELKDLTQKVELLEKF. Positions 246–288 form a coiled coil; it reads LLETLKDELKLFNETAKKQMEELQALKVKLKLKEKERIQFLEQ.

Part of an astrin (SPAG5)-kinastrin (SKAP) complex containing KNSTRN, SPAG5, PLK1, DYNLL1 and SGO2. Interacts with SPAG5. Directly binds to microtubules, although at relatively low affinity. Interacts with CENPE; this interaction greatly favors microtubule-binding. Interacts with DSN1/MIS13; leading to localization to kinetochores. Interacts with MAPRE1/EB1; leading to localization to the microtubule plus ends. Interacts with PRPF19. Interacts with DYNLL1. Interacts with MAP4.

The protein resides in the nucleus. The protein localises to the chromosome. It localises to the centromere. It is found in the kinetochore. Its subcellular location is the cytoplasm. The protein resides in the cytoskeleton. The protein localises to the spindle pole. It localises to the microtubule organizing center. Its function is as follows. Essential component of the mitotic spindle required for faithful chromosome segregation and progression into anaphase. Promotes the metaphase-to-anaphase transition and is required for chromosome alignment, normal timing of sister chromatid segregation, and maintenance of spindle pole architecture. The astrin (SPAG5)-kinastrin (SKAP) complex promotes stable microtubule-kinetochore attachments. Required for kinetochore oscillations and dynamics of microtubule plus-ends during live cell mitosis, possibly by forming a link between spindle microtubule plus-ends and mitotic chromosomes to achieve faithful cell division. This chain is Small kinetochore-associated protein (Knstrn), found in Rattus norvegicus (Rat).